Here is a 4558-residue protein sequence, read N- to C-terminus: Multifunctional-autoprocessing repeats-in-toxin (4558 aa).

An N-terminal signal peptide occupies residues 1-32 (MVFYLIPKRRVWLMGKPFWRSVEYFFTGNYSA). RtxA repeat units follow at residues 114–131 (GAAG…GDVS), 134–151 (GAAA…GNVT), 154–170 (GAGG…QGNL), 174–197 (GAGA…GDVT), 200–217 (GAGA…GNIT), 220–237 (GAGA…GDIT), 268–285 (GVGG…GDIH), 288–304 (GGGA…GNDF), 594–611 (GAGG…GNVH), 614–630 (GGGI…FGNT), 634–651 (GGGA…GDLT), 654–668 (GAGL…SEQG), 751–763 (AGGA…MGEG), 769–781 (MLGG…HISN), 792–808 (ALGG…GNTL), 811–826 (MGGG…DGTT), 830–845 (MVGG…NGDT), 851–865 (GVGN…GQTL), 868–885 (MGAA…TSIA), 887–901 (MIGA…GEGN), 906–920 (MGGL…GNGD), 925–942 (MVAE…MSVA), 944–960 (MLAK…GTTL), 982–994 (MIGQ…KVGN), 1001–1016 (MVGK…DGTS), 1041–1053 (GKAN…GDGL), 1077–1089 (AAAK…HVGD), 1097–1112 (AGKG…GTTV), 1120–1132 (GNVM…GTTI), 1135–1152 (AKGK…LGVN), 1155–1169 (WGQA…DGDR), 1173–1189 (AKGE…GQEV), 1194–1209 (GEAN…DDYT), 1211–1227 (AWGK…GQNV), 1230–1246 (AKGE…GDSF), 1252–1266 (KGNI…MQVT), 1268–1285 (AKGQ…LNVT), 1306–1323 (AWGK…LNVA), and 1325–1342 (MKGK…LNIN). 3 disordered regions span residues 1623–1688 (HATQ…KEES), 1752–1779 (TLSD…QNRA), and 1791–1890 (DAEK…NADG). A compositionally biased stretch (polar residues) spans 1625–1634 (TQNPAAQNAL). Residues 1635–1654 (SDKERAEADRQRLEQEKQKQ) show a composition bias toward basic and acidic residues. The segment covering 1660–1679 (GSQSQLESTDQQALENNGQA) has biased composition (polar residues). Residues 1791 to 1815 (DAEKRKADALAKGKDAQQAESDAHH) show a composition bias toward basic and acidic residues. The span at 1879–1888 (HVNTDSQTNA) shows a compositional bias: polar residues. In terms of domain architecture, ACD spans 1988-2422 (VPGFKSHFAS…HAEQWAKITA (435 aa)). ATP is bound at residue 1999–2003 (SIGIE). Residues glutamate 2003, glutamate 2065, and glutamine 2149 each coordinate Mg(2+). An ATP-binding site is contributed by arginine 2255. Glutamate 2326 serves as a coordination point for Mg(2+). A membrane localization region (MLD) region spans residues 2574–2658 (ELMSVTELLD…SLLNQVNTRL (85 aa)). The segment at 2734–3098 (EYGQTVADTI…HQVTDVLDAL (365 aa)) is rho inactivation domain (RID). The tract at residues 3195–3310 (VVLFLHGSGS…MPSMTKAITA (116 aa)) is ABH effector region. The interval 3404–3426 (ASVDEDLDQQGLDTTSTKDQGIS) is disordered. The span at 3414–3426 (GLDTTSTKDQGIS) shows a compositional bias: polar residues. Residues 3462–3646 (PTTDGGETRF…AENNKVSLSW (185 aa)) form the Peptidase C80 domain. 1D-myo-inositol hexakisphosphate contacts are provided by residues 3468–3470 (ETR), 3495–3496 (KH), and arginine 3526. Histidine 3532 functions as the For cysteine protease activity in the catalytic mechanism. Serine 3577 contacts 1D-myo-inositol hexakisphosphate. Residue cysteine 3581 is the Nucleophile; for cysteine protease activity of the active site. 1D-myo-inositol hexakisphosphate is bound by residues 3610–3612 (SVR), 3623–3624 (RK), lysine 3636, and lysine 3641.

Mg(2+) serves as cofactor.

It localises to the secreted. The protein resides in the host cytoplasm. The protein localises to the host cytosol. It is found in the host cell membrane. It carries out the reaction L-lysyl-/S-(2E,6E,10E)-geranylgeranyl-L-cysteinyl-[protein] + hexadecanoyl-CoA = N(6)-hexadecanoyl-L-lysyl-/S-(2E,6E,10E)-geranylgeranyl-L-cysteinyl-[protein] + CoA + H(+). It catalyses the reaction L-lysyl-/S-(2E,6E,10E)-geranylgeranyl-L-cysteinyl-[protein] + dodecanoyl-CoA = N(6)-dodecanoyl-L-lysyl-/S-(2E,6E,10E)-geranylgeranyl-L-cysteinyl-[protein] + CoA + H(+). The catalysed reaction is L-lysyl-/S-(2E,6E,10E)-geranylgeranyl-L-cysteinyl-[protein] + decanoyl-CoA = N(6)-decanoyl-L-lysyl-/S-(2E,6E,10E)-geranylgeranyl-L-cysteinyl-[protein] + CoA + H(+). Protease activity is inhibited by N-ethylmaleimide but not other protease inhibitors. Protease activity is inhibited by aza-leucine epoxide. Protease activity is activated upon binding inositol hexakisphosphate (InsP6) via an allosteric mechanism: the active site is disordered or occluded in the absence of InsP6, protecting the protease active-site sulfhydryl until the toxin enters a eukaryotic cell. Upon processing at the Leu-3441-Ala-3442 site, the peptidase C80 domain is converted to a form with much reduced affinity for InsP6, but is reactivated for high affinity binding of InsP6 by cooperative binding of both a new substrate and InsP6. Reactivation allows cleavage at other sites, specifically at Leu residues between the effector domains. Its function is as follows. Precursor of a multifunctional toxin that causes destruction of the actin cytoskeleton by covalent cross-linking of actin and inactivation of Rho GTPases when translocated into the host cytoplasm. Upon translocation into the host cell, undergoes autoprocessing in cis mediated by the peptidase C80 domain (also named CPD domain): the protease activity is activated upon binding inositol hexakisphosphate (InsP6) present at the host cell membrane and delivers the Cysteine protease domain-containing toxin F3 chain to the host cytosol. The Cysteine protease domain-containing toxin F3 chain will then further cleave and release effector toxin chains that cause disassembly of the actin cytoskeleton and enhance V.cholerae colonization of the small intestine, possibly by facilitating evasion of phagocytic cells. In terms of biological role, following autocatalytic cleavage in cis at the Leu-3441-Ala-3442 site, this chain mediates processing in trans to release other individual toxin chains to the host cytosol. Released effector toxin chains cause disassembly of the actin cytoskeleton and enhance V.cholerae colonization of the small intestine, possibly by facilitating evasion of phagocytic cells. Actin-directed toxin that catalyzes the covalent cross-linking of host cytoplasmic monomeric actin. Mediates the cross-link between 'Lys-50' of one monomer and 'Glu-270' of another actin monomer, resulting in formation of highly toxic actin oligomers that cause cell rounding. The toxin can be highly efficient at very low concentrations by acting on formin homology family proteins: toxic actin oligomers bind with high affinity to formins and adversely affect both nucleation and elongation abilities of formins, causing their potent inhibition in both profilin-dependent and independent manners. Acts as an acid--amino-acid ligase that transfers the gamma-phosphoryl group of ATP to the 'Glu-270' actin residue, resulting in the formation of an activated acyl phosphate intermediate. This intermediate is further hydrolyzed and the energy of hydrolysis is utilized for the formation of the amide bond between actin subunits. Functionally, N-epsilon-fatty acyltransferase that mediates lysine-palmitoylation of host Rho GTPase proteins, with a strong preference for host Rac1. After delivery to the host cytosol, localizes to the host cell membrane where it palmitoylates host Rho GTPase proteins, resulting in loss of all active GTP-bound Rho and subsequent actin depolymerization. Prenylation of host Rac1 at the C-terminus is required for lysine-palmitoylation. Its function is as follows. Indirectly activates the small GTPase CDC42. This Vibrio cholerae serotype O1 (strain ATCC 39315 / El Tor Inaba N16961) protein is Multifunctional-autoprocessing repeats-in-toxin.